We begin with the raw amino-acid sequence, 71 residues long: EEAMPSAWPCCDECGTCTRMIPPRCTCMDVSPSGCHPACKNCVQTTLGGRDVFWCMLRIENFCKRRCTPAR.

Intrachain disulfides connect cysteine 10–cysteine 67, cysteine 11–cysteine 27, cysteine 14–cysteine 63, cysteine 17–cysteine 25, cysteine 35–cysteine 42, and cysteine 39–cysteine 55.

It belongs to the Bowman-Birk serine protease inhibitor family.

Its function is as follows. Inhibits trypsin but not chymotrypsin. This chain is Bowman-Birk type trypsin inhibitor, found in Triticum aestivum (Wheat).